The primary structure comprises 388 residues: Zinc finger CCCH domain-containing protein 47 (388 aa).

Disordered stretches follow at residues methionine 1–leucine 130 and proline 144–alanine 282. Composition is skewed to basic and acidic residues over residues alanine 61 to valine 109 and proline 181 to arginine 193. Positions alanine 260–serine 274 are enriched in low complexity. 2 C3H1-type zinc fingers span residues histidine 321 to glutamate 348 and glycine 359 to valine 388.

This Oryza sativa subsp. japonica (Rice) protein is Zinc finger CCCH domain-containing protein 47.